The following is a 431-amino-acid chain: Trigger factor (431 aa).

In terms of domain architecture, PPIase FKBP-type spans 165 to 250 (GDTVVIDFDG…IHELKRKELP (86 aa)).

This sequence belongs to the FKBP-type PPIase family. Tig subfamily.

The protein localises to the cytoplasm. The catalysed reaction is [protein]-peptidylproline (omega=180) = [protein]-peptidylproline (omega=0). Functionally, involved in protein export. Acts as a chaperone by maintaining the newly synthesized protein in an open conformation. Functions as a peptidyl-prolyl cis-trans isomerase. The chain is Trigger factor from Leuconostoc mesenteroides subsp. mesenteroides (strain ATCC 8293 / DSM 20343 / BCRC 11652 / CCM 1803 / JCM 6124 / NCDO 523 / NBRC 100496 / NCIMB 8023 / NCTC 12954 / NRRL B-1118 / 37Y).